We begin with the raw amino-acid sequence, 290 residues long: ATP synthase gamma chain (290 aa).

Belongs to the ATPase gamma chain family. In terms of assembly, F-type ATPases have 2 components, CF(1) - the catalytic core - and CF(0) - the membrane proton channel. CF(1) has five subunits: alpha(3), beta(3), gamma(1), delta(1), epsilon(1). CF(0) has three main subunits: a, b and c.

The protein localises to the cell inner membrane. Produces ATP from ADP in the presence of a proton gradient across the membrane. The gamma chain is believed to be important in regulating ATPase activity and the flow of protons through the CF(0) complex. This is ATP synthase gamma chain from Dinoroseobacter shibae (strain DSM 16493 / NCIMB 14021 / DFL 12).